The chain runs to 605 residues: Ubiquitin carboxyl-terminal hydrolase 2 (605 aa).

Positions 1–200 (MSQLSSTLKR…CPEYLVDYLE (200 aa)) are necessary for interaction with MDM4. Disordered stretches follow at residues 71-107 (LLDY…GSGL) and 237-264 (WETG…KSAQ). Basic and acidic residues predominate over residues 90 to 100 (KRAESQTRGTE). The span at 245–255 (PGPSRSSSPGR) shows a compositional bias: low complexity. One can recognise a USP domain in the interval 267-599 (AGLRNLGNTC…DAYLLFYELA (333 aa)). Residue C276 is the Nucleophile of the active site. The tract at residues 403–503 (YLEREDSRIG…FPKILVLHLK (101 aa)) is necessary for interaction with MDM4. Zn(2+) contacts are provided by C425, C428, C476, and C479. The Proton acceptor role is filled by H557.

Belongs to the peptidase C19 family. USP2 subfamily. Homooligomer. Found in trimeric complex with MDM2 and MDM4 and USP2. Interacts with CCND1; the interaction is direct and promotes its stabilization by antagonizing ubiquitin-dependent degradation. Interacts (via N-terminus and C-terminus) with MDM2. Interacts with MDM4. Interacts with PER1. Interacts with KCNQ1; counteracts the NEDD4L-specific down-regulation of I(Ks) and restore plasma membrane localization of KCNQ1. Isoform 4: Interacts with NHERF4 and CLTC. As to expression, expressed in mesangial cells of the kidney and in different types of glomerulonephritides (at protein level).

It localises to the cytoplasm. The protein resides in the perinuclear region. It is found in the nucleus. Its subcellular location is the membrane. The catalysed reaction is Thiol-dependent hydrolysis of ester, thioester, amide, peptide and isopeptide bonds formed by the C-terminal Gly of ubiquitin (a 76-residue protein attached to proteins as an intracellular targeting signal).. Its activity is regulated as follows. Cleavage is inhibited by ubiquitin in a dosage-dependent manner. Cleavage is blocked by ubiquitin aldehyde. In terms of biological role, hydrolase that deubiquitinates polyubiquitinated target proteins such as MDM2, MDM4 and CCND1. Isoform 1 and isoform 4 possess both ubiquitin-specific peptidase and isopeptidase activities. Deubiquitinates MDM2 without reversing MDM2-mediated p53/TP53 ubiquitination and thus indirectly promotes p53/TP53 degradation and limits p53 activity. Has no deubiquitinase activity against p53/TP53. Prevents MDM2-mediated degradation of MDM4. Plays a role in the G1/S cell-cycle progression in normal and cancer cells. Regulates the circadian clock by modulating its intrinsic circadian rhythm and its capacity to respond to external cues. Associates with clock proteins and deubiquitinates core clock component PER1 but does not affect its overall stability. Regulates the nucleocytoplasmic shuttling and nuclear retention of PER1 and its repressive role on the clock transcription factors CLOCK and BMAL1. Plays a role in the regulation of myogenic differentiation of embryonic muscle cells. Circadian clock output effector that regulates Ca(2+) absorption in the small intestine. Probably functions by regulating protein levels of the membrane scaffold protein NHERF4 in a rhythmic manner, and is therefore likely to control Ca(2+) membrane permeability mediated by the Ca(2+) channel TRPV6 in the intestine. In Homo sapiens (Human), this protein is Ubiquitin carboxyl-terminal hydrolase 2 (USP2).